A 353-amino-acid chain; its full sequence is Mitogen-activated protein kinase mpkB (353 aa).

The 289-residue stretch at 21–309 (YEIQDVIGEG…VEEALRHPYL (289 aa)) folds into the Protein kinase domain. Residues 27–35 (IGEGAYGVV) and lysine 50 contribute to the ATP site. Aspartate 145 serves as the catalytic Proton acceptor.

The protein belongs to the protein kinase superfamily. Ser/Thr protein kinase family. MAP kinase subfamily. Mg(2+) serves as cofactor.

The protein resides in the nucleus. The enzyme catalyses L-seryl-[protein] + ATP = O-phospho-L-seryl-[protein] + ADP + H(+). The catalysed reaction is L-threonyl-[protein] + ATP = O-phospho-L-threonyl-[protein] + ADP + H(+). Its activity is regulated as follows. Activated by threonine and tyrosine phosphorylation. In terms of biological role, mitogen-activated protein kinase (MAPK) that plays a role in conidiation and regulation of secondary metabolite biosynthesis. Acts as a repressor of dihydroxynaphthalene (DHN)-melanin production. This Aspergillus fumigatus (strain CBS 144.89 / FGSC A1163 / CEA10) (Neosartorya fumigata) protein is Mitogen-activated protein kinase mpkB.